Consider the following 266-residue polypeptide: Large ribosomal subunit protein eL8 (266 aa).

Residues 1 to 11 (MPKGKKAKGKK) are compositionally biased toward basic residues. The disordered stretch occupies residues 1 to 21 (MPKGKKAKGKKVAPAPSVAKK).

Belongs to the eukaryotic ribosomal protein eL8 family. In terms of assembly, component of the large ribosomal subunit.

The protein localises to the cytoplasm. In terms of biological role, component of the large ribosomal subunit. The ribosome is a large ribonucleoprotein complex responsible for the synthesis of proteins in the cell. In Ictalurus punctatus (Channel catfish), this protein is Large ribosomal subunit protein eL8 (rpl7a).